The sequence spans 123 residues: UPF0102 protein CLK_1817 (123 aa).

Belongs to the UPF0102 family.

The sequence is that of UPF0102 protein CLK_1817 from Clostridium botulinum (strain Loch Maree / Type A3).